The sequence spans 221 residues: Ribosomal RNA large subunit methyltransferase E (221 aa).

S-adenosyl-L-methionine is bound by residues G60, W62, D89, D105, and D134. K174 acts as the Proton acceptor in catalysis.

The protein belongs to the class I-like SAM-binding methyltransferase superfamily. RNA methyltransferase RlmE family.

The protein resides in the cytoplasm. It carries out the reaction uridine(2552) in 23S rRNA + S-adenosyl-L-methionine = 2'-O-methyluridine(2552) in 23S rRNA + S-adenosyl-L-homocysteine + H(+). In terms of biological role, specifically methylates the uridine in position 2552 of 23S rRNA at the 2'-O position of the ribose in the fully assembled 50S ribosomal subunit. The polypeptide is Ribosomal RNA large subunit methyltransferase E (Cupriavidus taiwanensis (strain DSM 17343 / BCRC 17206 / CCUG 44338 / CIP 107171 / LMG 19424 / R1) (Ralstonia taiwanensis (strain LMG 19424))).